The primary structure comprises 1005 residues: Protein TIC 214 (1005 aa).

The next 6 membrane-spanning stretches (helical) occupy residues 25 to 45 (VGLY…LFLL), 67 to 87 (FFTG…HLAL), 91 to 111 (HTIL…SNSG), 131 to 151 (SFQL…SVLG), 177 to 197 (FVGW…VFVW), and 304 to 324 (LFSI…PLLY). Disordered regions lie at residues 457-481 (VEEG…EREE) and 767-833 (KKKK…KRKQ). Basic residues predominate over residues 783–810 (KQKKVKSKQKKVKSKQKKVKSKQKKVKS). Positions 811–824 (KQNEIKSKQNEIKS) are enriched in basic and acidic residues.

Belongs to the TIC214 family. As to quaternary structure, part of the Tic complex.

The protein localises to the plastid. It localises to the chloroplast inner membrane. Functionally, involved in protein precursor import into chloroplasts. May be part of an intermediate translocation complex acting as a protein-conducting channel at the inner envelope. The polypeptide is Protein TIC 214 (Oenothera berteroana (Bertero's evening primrose)).